A 389-amino-acid chain; its full sequence is Protein CysO (389 aa).

Lysine 127 carries the N6-(pyridoxal phosphate)lysine modification. Pyridoxal 5'-phosphate-binding positions include asparagine 155, 261 to 265 (GTSGH), and serine 341.

It belongs to the cysteine synthase/cystathionine beta-synthase family. As to quaternary structure, homodimer. Requires pyridoxal 5'-phosphate as cofactor.

It catalyses the reaction O-acetyl-L-serine + hydrogen sulfide = L-cysteine + acetate. The catalysed reaction is O-phospho-L-serine + hydrogen sulfide + H(+) = L-cysteine + phosphate. It carries out the reaction L-homocysteine + L-serine = L,L-cystathionine + H2O. Its pathway is amino-acid biosynthesis; L-cysteine biosynthesis; L-cysteine from L-serine: step 2/2. In terms of biological role, cysteine synthase that can also catalyze the synthesis of S-sulfo-L-cysteine from thiosulfate and O(3)-acetyl-L-serine, as well as the sulfhydrylation of L-serine by sulfide. This chain is Protein CysO (cysO), found in Aeropyrum pernix (strain ATCC 700893 / DSM 11879 / JCM 9820 / NBRC 100138 / K1).